We begin with the raw amino-acid sequence, 238 residues long: Expansin-like protein 5 (238 aa).

Residues 1 to 21 (MRINFKLILIILTSFYGIINC) form the signal peptide. The Expansin-like EG45 domain occupies 45-145 (NGNCGFGKLT…VKVPCRVSGN (101 aa)). 2 disulfide bridges follow: Cys-48/Cys-78 and Cys-81/Cys-140. Residue Asn-89 is glycosylated (N-linked (GlcNAc...) asparagine).

The protein belongs to the expansin family. Expansin A subfamily.

It localises to the secreted. Its function is as follows. May serve to lubricate the movement of the cellulose microfibrils during cell growth and wall extension and/or may serve to maintain the fluid state of the slug cell wall. The chain is Expansin-like protein 5 (expl5) from Dictyostelium discoideum (Social amoeba).